Here is a 746-residue protein sequence, read N- to C-terminus: Proline--tRNA ligase (746 aa).

Residues 1 to 223 form a required for editing of incorrectly charged tRNA region; the sequence is MNNNTNGEII…NSNNNNNNNN (223 aa). The span at 181–201 shows a compositional bias: basic and acidic residues; it reads TSKARVDKKEDVQEEMAKNEE. The segment at 181–226 is disordered; sequence TSKARVDKKEDVQEEMAKNEELQNNNNNNKNNSNSNNNNNNNNNHI. Positions 204–224 are enriched in low complexity; it reads NNNNNNKNNSNSNNNNNNNNN. Arg-390 is an L-proline binding site. ATP is bound by residues 390–394, 401–405, and 475–477; these read RWEFK, RTREF, and QAA. Residue His-480 participates in L-proline binding. 512 to 514 contributes to the ATP binding site; that stretch reads TTR.

This sequence belongs to the class-II aminoacyl-tRNA synthetase family. ProS type 3 subfamily. Homodimer.

It localises to the cytoplasm. The enzyme catalyses tRNA(Pro) + L-proline + ATP = L-prolyl-tRNA(Pro) + AMP + diphosphate. Its activity is regulated as follows. Inhibited by the quinazolinone-based compound febrifugine from the Chinese plant Dichroa febrifuga which is used to treat malaria-associated fever. Also inhibited by febrifugine derivatives such as halofuginone. Functionally, catalyzes the attachment of proline to tRNA(Pro) in a two-step reaction: proline is first activated by ATP to form Pro-AMP and then transferred to the acceptor end of tRNA(Pro). Functions in trans to edit the amino acid moiety from incorrectly charged Ala-tRNA(Pro). Has no activity on correctly charged Pro-tRNA(Pro) or Ala-tRNA(Ala). This is Proline--tRNA ligase from Plasmodium falciparum (isolate 3D7).